A 62-amino-acid chain; its full sequence is Conotoxin Im5.1 (62 aa).

Residues 1-19 form the signal peptide; it reads MYCLPVFIILLLLISSAPS. The propeptide occupies 20 to 48; that stretch reads TPPQPRNKDRVHLISLLDNHKQILQRDWN. A Tryptophan amide modification is found at W60.

This sequence belongs to the conotoxin T superfamily. Post-translationally, contains 2 disulfide bonds that can be either 'C1-C3, C2-C4' or 'C1-C4, C2-C3', since these disulfide connectivities have been observed for conotoxins with cysteine framework V (for examples, see AC P0DQQ7 and AC P81755). As to expression, expressed by the venom duct.

The protein resides in the secreted. This Conus imperialis (Imperial cone) protein is Conotoxin Im5.1.